The primary structure comprises 745 residues: MEVMNLIEQPIKVTEWQQTYTYDSGIHSGVNTCVPSVSSKGLLDEDDTCGRQYTLKKTTTYTQGVPQSQGDLEYQMSTTARAKRVREAMCPGVSGEDSSLLLATQVEGQTTNLQRLAEPSQLLKSAIVHLINYQDDAELATRALPELTKLLNDEDPVVVTKAAMIVNQLSKKEASRRALMGSPQLVAAVVRTMQNTSDLDTARCTTSILHNLSHHREGLLAIFKSGGIPALVRMLSSPVESVLFYAITTLHNLLLYQEGAKMAVRLADGLQKMVPLLNKNNPKFLAITTDCLQLLAYGNQESKLIILANGGPQGLVQIMRNYSYEKLLWTTSRVLKVLSVCPSNKPAIVEAGGMQALGKHLTSNSPRLVQNCLWTLRNLSDVATKQEGLENVLKILVNQLSVDDVNVLTCATGTLSNLTCNNSKNKTLVTQNSGVEALIHAILRAGDKDDITEPAVCALRHLTSRHPEAEMAQNSVRLNYGIPAIVKLLNQPNQWPLVKATIGLIRNLALCPANHAPLQEAAVIPRLVQLLVKAHQDAQRHVAAGTQQPYTDGVRMEEIVEGCTGALHILARDPMNRMEIFRLNTIPLFVQLLYSSVENIQRVAAGVLCELAQDKEAADAIDAEGASAPLMELLHSRNEGTATYAAAVLFRISEDKNPDYRKRVSVELTNSLFKHDPAAWEAAQSMIPINEPYADDMDATYRPMYSSDVPLDPLDMHMDMDGDYPMDTYSDGLRPPYPAADHMLA.

At methionine 1 the chain carries N-acetylmethionine. O-linked (GlcNAc) threonine glycosylation occurs at threonine 14. Phosphoserine occurs at positions 99 and 125. ARM repeat units follow at residues 132–171 (NYQDDAELATRALPELTKLLNDEDPVVVTKAAMIVNQLSK), 172–215 (KEAS…LSHH), 216–255 (REGLLAIFKSGGIPALVRMLSSPVESVLFYAITTLHNLLL), 258–297 (EGAKMAVRLADGLQKMVPLLNKNNPKFLAITTDCLQLLAY), 298–341 (GNQE…LSVC), 342–381 (PSNKPAIVEAGGMQALGKHLTSNSPRLVQNCLWTLRNLSD), 383–420 (ATKQEGLENVLKILVNQLSVDDVNVLTCATGTLSNLTC), 423–464 (SKNK…HLTS), 470–510 (EMAQ…NLAL), 512–551 (PANHAPLQEAAVIPRLVQLLVKAHQDAQRHVAAGTQQPYT), 574–613 (PMNRMEIFRLNTIPLFVQLLYSSVENIQRVAAGVLCELAQ), and 615–661 (KEAA…PDYR). The segment at 132 to 297 (NYQDDAELAT…TTDCLQLLAY (166 aa)) is interaction with DSC1 and DSG1. Serine 182 bears the Phosphoserine mark. The interaction with DSC1 stretch occupies residues 574–661 (PMNRMEIFRL…ISEDKNPDYR (88 aa)). Phosphoserine occurs at positions 665 and 730.

Belongs to the beta-catenin family. Homodimer. Component of an E-cadherin/catenin adhesion complex composed of at least E-cadherin/CDH1 and gamma-catenin/JUP, and possibly alpha-catenin/CTNNA1; the complex is located to adherens junctions. The stable association of CTNNA1 is controversial as CTNNA1 was shown not to bind to F-actin when assembled in the complex. Interacts with MUC1. Interacts with CAV1. Interacts with PTPRJ. Interacts with DSG1. Interacts with DSC1 and DSC2. Interacts with PKP2. Interacts with PKP3 (via N-terminus); the interaction is required for PKP3 localization to desmosome cell-cell junctions. Interacts with DSG4. May be phosphorylated by FER. In terms of tissue distribution, expressed in the heart (at protein level).

The protein localises to the cell junction. It localises to the adherens junction. It is found in the desmosome. Its subcellular location is the cytoplasm. The protein resides in the cytoskeleton. The protein localises to the cell membrane. It localises to the nucleus. In terms of biological role, common junctional plaque protein. The membrane-associated plaques are architectural elements in an important strategic position to influence the arrangement and function of both the cytoskeleton and the cells within the tissue. The presence of plakoglobin in both the desmosomes and in the intermediate junctions suggests that it plays a central role in the structure and function of submembranous plaques. Acts as a substrate for VE-PTP and is required by it to stimulate VE-cadherin function in endothelial cells. Can replace beta-catenin in E-cadherin/catenin adhesion complexes which are proposed to couple cadherins to the actin cytoskeleton. The protein is Junction plakoglobin of Rattus norvegicus (Rat).